Consider the following 811-residue polypeptide: MTRKLITAALPYVNNVPHLGNLIQGLSADVFARFCRMRGYHTCFVCGTDEYGTASETRAAEQGLSPAQLCAHYHALHRDIYQWFDLSFDYFGRTTSDAHTELTQALFRHLDARGFISEHESAQAYCLHCARFLADRYLRGTCPHCRNAEARADQCEHCGVLLEPETLLNARCVSCGTAPEFRPTRHLYLNLPALEKAYRSWFCTTNHLWTKNAVRMTEGWLRTGLQERAITRDLRWGVPVPKAGFEQKVFYVWFDAPVGYISITKCGTEAASSQEGGGTDDGVKEKWQSWWLDQQDVELVQFVGKDNIPFHTLFFPCMLIGSGQRWTMLTRLSATEYLNYEGGKFSKSLGVGVFGSDAKESGIPSDLWRFYLLYHRPEKSDAHFTWHEFQERVNSELIGNLCNLVNRTLTFVARTYGGVVPAQDGARSTRAQVMEETLALREAVRNTAKRMTDLMEQVQLREAFREVFALSARANKALQDGAPWKTRAQDRERADALMRELCYVIRDVLILAHPFLPWYTQQAARFLGVQLSSCAPEGGGAVCAAKKDADTAQPDTVQPTLRWSDVGERKGLTQVHPPVILFRPLETETIAAYRARYAGTARDGAGVSVPRTAQMPTGMNKKETDAQQKKEEREMPPPSDTARLSAFFSERVVLKVARVLQVERHPNADMLFVETLDDGSGVERVIVSGLVPYMAADALRGAHVLIVDNLQPRSLRGVRSCGMLLAAEYVDAQGTKAIELVQAPWALPGERATLASAPPVITPHGSAVIDADAFFSVPIRVVNYAVEVAGEPLMVGGRPLVMQRVKEGTVG.

The 'HIGH' region signature appears at 11–21 (PYVNNVPHLGN). 4 residues coordinate Zn(2+): Cys-142, Cys-145, Cys-155, and Cys-158. Positions 344-348 (KFSKS) match the 'KMSKS' region motif. Residue Lys-347 participates in ATP binding. The tract at residues 606-640 (GVSVPRTAQMPTGMNKKETDAQQKKEEREMPPPSD) is disordered. Residues 620-635 (NKKETDAQQKKEEREM) show a composition bias toward basic and acidic residues. A tRNA-binding domain is found at 648 to 753 (FSERVVLKVA…PWALPGERAT (106 aa)).

Belongs to the class-I aminoacyl-tRNA synthetase family. MetG type 1 subfamily. As to quaternary structure, homodimer. It depends on Zn(2+) as a cofactor.

The protein resides in the cytoplasm. It catalyses the reaction tRNA(Met) + L-methionine + ATP = L-methionyl-tRNA(Met) + AMP + diphosphate. Its function is as follows. Is required not only for elongation of protein synthesis but also for the initiation of all mRNA translation through initiator tRNA(fMet) aminoacylation. The protein is Methionine--tRNA ligase of Treponema pallidum (strain Nichols).